The sequence spans 93 residues: Small ribosomal subunit protein uS19 (93 aa).

Residues 74–93 (FSPTRTFRGHVKDDRKSKRR) form a disordered region. Residues 83–93 (HVKDDRKSKRR) show a composition bias toward basic and acidic residues.

Belongs to the universal ribosomal protein uS19 family.

Protein S19 forms a complex with S13 that binds strongly to the 16S ribosomal RNA. The chain is Small ribosomal subunit protein uS19 from Streptomyces griseus subsp. griseus (strain JCM 4626 / CBS 651.72 / NBRC 13350 / KCC S-0626 / ISP 5235).